Reading from the N-terminus, the 143-residue chain is Large ribosomal subunit protein uL11 (143 aa).

This sequence belongs to the universal ribosomal protein uL11 family. As to quaternary structure, part of the ribosomal stalk of the 50S ribosomal subunit. Interacts with L10 and the large rRNA to form the base of the stalk. L10 forms an elongated spine to which L12 dimers bind in a sequential fashion forming a multimeric L10(L12)X complex. Post-translationally, one or more lysine residues are methylated.

Its function is as follows. Forms part of the ribosomal stalk which helps the ribosome interact with GTP-bound translation factors. The sequence is that of Large ribosomal subunit protein uL11 from Caulobacter sp. (strain K31).